The sequence spans 194 residues: MGARDCTPLLLLLLSFLLFPLGLPVLGAPPRLICDSRVLERYILEAREAENATMGCAEGCSFSENITVPDTKVNFYAWKRMEVQQQALEVWQGLALLSEAIFRGQALLANASQPCEALRLHVDKAVSGLRSLTSLLRALGAQKEAIPLPDATPSAAPLRIFTVDALSKLFRIYSNFLRGKLTLYTGEACRRGDR.

An N-terminal signal peptide occupies residues 1-27 (MGARDCTPLLLLLLSFLLFPLGLPVLG). 2 cysteine pairs are disulfide-bonded: C34–C189 and C56–C60. N51 carries N-linked (GlcNAc...) asparagine glycosylation. Residues N65 and N110 are each glycosylated (N-linked (GlcNAc...) asparagine).

This sequence belongs to the EPO/TPO family. As to expression, produced by kidney or liver of adult mammals and by liver of fetal or neonatal mammals.

The protein resides in the secreted. Functionally, hormone involved in the regulation of erythrocyte proliferation and differentiation and the maintenance of a physiological level of circulating erythrocyte mass. Binds to EPOR leading to EPOR dimerization and JAK2 activation thereby activating specific downstream effectors, including STAT1 and STAT3. This chain is Erythropoietin (EPO), found in Ovis aries (Sheep).